The sequence spans 378 residues: Alcohol dehydrogenase 1 (378 aa).

Cysteine 48 provides a ligand contact to Zn(2+). 49–53 contributes to the NAD(+) binding site; it reads HTDVL. Zn(2+) contacts are provided by histidine 69, cysteine 99, cysteine 102, cysteine 105, cysteine 113, and cysteine 177. Residues 202-207, aspartate 226, lysine 231, 274-276, 297-299, and 321-323 each bind NAD(+); these read GIGTVG, TGV, IGA, and TAF.

The protein belongs to the zinc-containing alcohol dehydrogenase family. Class-IV subfamily. In terms of assembly, homodimer. The cofactor is Zn(2+). In terms of tissue distribution, present in non-glandular trichome cells.

The protein localises to the nucleus. Its subcellular location is the cytoplasm. The protein resides in the cytosol. It carries out the reaction (+)-artemisinic alcohol + NAD(+) = (+)-artemisinic aldehyde + NADH + H(+). The protein operates within sesquiterpene biosynthesis. Functionally, involved in the biosynthesis of the antimalarial endoperoxide artemisinin. Catalyzes the conversion of artemisinic alcohol into artemisinic aldehyde. The polypeptide is Alcohol dehydrogenase 1 (Artemisia annua (Sweet wormwood)).